Reading from the N-terminus, the 313-residue chain is Mitochondrial uncoupling protein 5 (313 aa).

Solcar repeat units lie at residues 4 to 108 (KGFA…IKGE), 117 to 208 (MPLM…VKET), and 217 to 307 (DGLG…VKKL). The next 6 helical transmembrane spans lie at 6-26 (FAEG…LDLI), 77-97 (MRAL…YSTT), 123-143 (IGAG…ADVA), 182-202 (RGSS…LASY), 223-243 (VSAS…VDVI), and 280-300 (YKGF…LFVT).

The protein belongs to the mitochondrial carrier (TC 2.A.29) family. In terms of tissue distribution, expressed in roots, leaves, stems and flowers.

Its subcellular location is the mitochondrion inner membrane. Its function is as follows. PUMPS are mitochondrial transporter proteins that create proton leaks across the inner mitochondrial membrane, thus uncoupling oxidative phosphorylation. This leads to a decrease in the efficiency of oxidative phosphorylation and an increase in heat production. May be involved in protecting plant cells against oxidative stress damage. Recombinant PUMP5, reconstituted into liposomes, transports a wide range of dicarboxylic acids including malate, oxaloacetate and succinate as well as phosphate, sulfate and thiosulfate. However, it is unknown if these transports are of any biological significance in vivo. The polypeptide is Mitochondrial uncoupling protein 5 (PUMP5) (Arabidopsis thaliana (Mouse-ear cress)).